A 181-amino-acid chain; its full sequence is Malignant T-cell-amplified sequence 1 (181 aa).

At threonine 81 the chain carries Phosphothreonine; by MAPK1 and MAPK3. The 80-residue stretch at 92–171 (LPHQQVDKGA…IGIENIHYLN (80 aa)) folds into the PUA domain. A Phosphoserine; by CDK1 modification is found at serine 118.

This sequence belongs to the MCTS1 family. In terms of assembly, interacts (via PUA domain) with DENR; the complex regulates translation reinitiation. In terms of processing, phosphorylation is critical for stabilization and promotion of cell proliferation. In terms of tissue distribution, ubiquitous. Over-expressed in T-cell lymphoid cell lines and in non-Hodgkin lymphoma cell lines as well as in a subset of primary large B-cell lymphomas.

The protein resides in the cytoplasm. Its function is as follows. Translation regulator forming a complex with DENR to promote translation reinitiation. Translation reinitiation is the process where the small ribosomal subunit remains attached to the mRNA following termination of translation of a regulatory upstream ORF (uORF), and resume scanning on the same mRNA molecule to initiate translation of a downstream ORF, usually the main ORF (mORF). The MCTS1/DENR complex is pivotal to two linked mechanisms essential for translation reinitiation. Firstly, the dissociation of deacylated tRNAs from post-termination 40S ribosomal complexes during ribosome recycling. Secondly, the recruitment in an EIF2-independent manner of aminoacylated initiator tRNA to P site of 40S ribosomes for a new round of translation. This regulatory mechanism governs the translation of more than 150 genes which translation reinitiation is MCTS1/DENR complex-dependent. Consequently, modulates various unrelated biological processes including cell cycle regulation and DNA damage signaling and repair. Notably, it positively regulates interferon gamma immunity to mycobacteria by enhancing the translation of JAK2. This chain is Malignant T-cell-amplified sequence 1 (MCTS1), found in Homo sapiens (Human).